The primary structure comprises 646 residues: Serine/threonine-protein kinase max-2 (646 aa).

Residues 19–40 form a disordered region; sequence FSPSDKDKDRDDEMKPSSSAMD. Residues 22-33 are compositionally biased toward basic and acidic residues; that stretch reads SDKDKDRDDEMK. A CRIB domain is found at 41-54; it reads ISQPYNTVHRVHVG. Residues 136–345 are disordered; sequence LQCSNGSATS…PPPPEEPPVR (210 aa). Composition is skewed to low complexity over residues 142-157 and 167-180; these read SATS…SSSA and LSTA…LSLS. Positions 196–205 are enriched in polar residues; sequence SAPQLKTFTG. The segment covering 214–223 has biased composition (pro residues); sequence SPFPPQPPVL. Positions 229 to 245 are enriched in low complexity; that stretch reads TASAVATTTTNPTTSNG. The span at 246-262 shows a compositional bias: pro residues; sequence APPPVPGSKGPPVPPKP. 2 stretches are compositionally biased toward low complexity: residues 273 to 307 and 323 to 334; these read SSGC…DGDV and KNGNTTTNKTTV. The Protein kinase domain maps to 376 to 627; sequence YEMKKQIGVG…TTELLAHPFL (252 aa). ATP-binding positions include 382-390 and Lys-405; that span reads IGVGASGTV. Asp-496 (proton acceptor) is an active-site residue.

Belongs to the protein kinase superfamily. STE Ser/Thr protein kinase family. STE20 subfamily. In terms of assembly, interacts with mlk-1; the interaction is independent of max-2 and mlk-1 kinase activities. Interacts with mig-2 (GTP-bound form). Mg(2+) serves as cofactor.

It localises to the perikaryon. The protein resides in the cell projection. Its subcellular location is the dendrite. It is found in the cytoplasm. The catalysed reaction is L-seryl-[protein] + ATP = O-phospho-L-seryl-[protein] + ADP + H(+). The enzyme catalyses L-threonyl-[protein] + ATP = O-phospho-L-threonyl-[protein] + ADP + H(+). Serine/threonine-protein kinase, which phosphorylates mlk-1. Involved in the stress response to heavy metals by activating the mlk-1/mek-1/kgb-1 pathway. In ventral cord commissural motoneurons, required for dorsal axon guidance downstream of unc-6/netrin repulsion receptor unc-5 and probably of Rho GTPases ced-10 and mig-2. Plays a redundant role with mig-10 in orientating axonal growth of HSN neurons. Plays a redundant role with pak-1 in P neuroblast migration and in distal tip cell (DTC)-mediated guidance of gonad elongation probably downstream of Rho GTPases. In association with pak-2, plays a role in embryogenesis. In association with pak-1, may be involved in spermatogenesis. This chain is Serine/threonine-protein kinase max-2, found in Caenorhabditis elegans.